Reading from the N-terminus, the 269-residue chain is Chymotrypsin-like elastase family member 2B (269 aa).

A signal peptide spans 1-16; that stretch reads MIRTLLLSTLVAGALS. Positions 17–28 are cleaved as a propeptide — activation peptide; the sequence is CGVSTYAPDMSR. In terms of domain architecture, Peptidase S1 spans 29–267; that stretch reads MLGGEEARPN…YNDWINSVIA (239 aa). A disulfide bridge connects residues cysteine 58 and cysteine 74. Active-site charge relay system residues include histidine 73 and aspartate 121. Disulfide bonds link cysteine 155-cysteine 222, cysteine 186-cysteine 202, and cysteine 212-cysteine 243. Catalysis depends on serine 216, which acts as the Charge relay system.

The protein belongs to the peptidase S1 family. Elastase subfamily. In terms of tissue distribution, pancreas.

The protein localises to the secreted. It carries out the reaction Preferential cleavage: Leu-|-Xaa, Met-|-Xaa and Phe-|-Xaa. Hydrolyzes elastin.. Its function is as follows. Acts upon elastin. This chain is Chymotrypsin-like elastase family member 2B (CELA2B), found in Homo sapiens (Human).